A 695-amino-acid chain; its full sequence is Potassium voltage-gated channel subfamily KQT member 4 (695 aa).

The segment at 1–21 is disordered; that stretch reads MAEAPPRRLGLGPPPGDAPRA. The Cytoplasmic portion of the chain corresponds to 1-96; sequence MAEAPPRRLG…VYNVLERPRG (96 aa). R93 is a binding site for a 1,2-diacyl-sn-glycero-3-phospho-(1D-myo-inositol-4,5-bisphosphate). A helical transmembrane segment spans residues 97-118; the sequence is WAFVYHVFIFLLVFSCLVLSVL. Over 119 to 129 the chain is Extracellular; it reads STIQEHQELAN. A helical transmembrane segment spans residues 130–152; it reads ECLLILEFVMIVVFGLEYIIRVW. Residues 153–168 lie on the Cytoplasmic side of the membrane; sequence SAGCCCRYRGWQGRFR. Residues 169–191 traverse the membrane as a helical segment; it reads FARKPFCVIDFIVFVASVAVIAA. K172 contacts a 1,2-diacyl-sn-glycero-3-phospho-(1D-myo-inositol-4,5-bisphosphate). The Extracellular segment spans residues 192 to 202; it reads GTQGNIFATSA. A helical; Voltage-sensor transmembrane segment spans residues 203–223; the sequence is LRSMRFLQILRMVRMDRRGGT. Residues R219, R220, K225, and S235 each coordinate a 1,2-diacyl-sn-glycero-3-phospho-(1D-myo-inositol-4,5-bisphosphate). At 224–235 the chain is on the cytoplasmic side; that stretch reads WKLLGSVVYAHS. A helical transmembrane segment spans residues 236-258; the sequence is KELITAWYIGFLVLIFASFLVYL. Over 259-270 the chain is Extracellular; the sequence is AEKDANSDFSSY. An intramembrane region (pore-forming) is located at residues 271–292; sequence ADSLWWGTITLTTIGYGDKTPH. T293 is a topological domain (extracellular). Residues 294 to 322 form a helical membrane-spanning segment; that stretch reads WLGRVLAAGFALLGISFFALPAGILGSGF. Residues 323–695 are Cytoplasmic-facing; that stretch reads ALKVQEQHRQ…ISRSVSTNMD (373 aa). 2 residues coordinate a 1,2-diacyl-sn-glycero-3-phospho-(1D-myo-inositol-4,5-bisphosphate): H330 and K333. The tract at residues 342–351 is interaction with CALM; sequence AANLIQAAWR. The interval 441–483 is disordered; it reads RMSSSQKRTGPSKQHLAPPPIPTSPSSEQVGEASSPSKVQKSW. Polar residues-rich tracts occupy residues 442-452 and 464-483; these read MSSSQKRTGPS and SPSS…QKSW. Residues 535-549 are interaction with CALM; it reads RSVRILKFLVAKRKF. The tract at residues 546–650 is C-terminal assembly domain (tetramerization); the sequence is KRKFKETLRP…SRCLRSGTSA (105 aa). The interval 588–608 is disordered; that stretch reads GRGPGDRKTREKGDKGPSDTE. Over residues 591–605 the composition is skewed to basic and acidic residues; it reads PGDRKTREKGDKGPS.

The protein belongs to the potassium channel family. KQT (TC 1.A.1.15) subfamily. Kv7.4/KCNQ4 sub-subfamily. Homotetramer. Interacts (via C-terminus) with calmodulin; forms a heterooctameric structure (with 4:4 KCNQ1:CALM stoichiometry); the interaction is calcium-independent, constitutive, participates in the proper assembly of a functional channel. The interaction with calcium-free CALM controls channel trafficking whereas interaction with calcium-bound CALM regulates channel gating. May form a functional heteromultimeric channel with KCNQ3. Interacts with HSP90AB1; promotes cell surface expression of KCNQ4. Expressed in both the inner (IHCs) and the outer hair cells (OHCs) of the cochlea. Reciprocal longitudinal gradients of expression is present in IHCs and OHCs. The strongest expression in IHCs is in the base of the cochlea and in the apex for OHCs. A basal to apical gradient of expression is also present in both type I and type II spiral ganglion cells.

It is found in the basal cell membrane. It catalyses the reaction K(+)(in) = K(+)(out). Its activity is regulated as follows. Two molecules of phosphatidylinositol-4,5-bisphosphate (PIP2-I and PIP2-II) are essential to activate KCNQ4 channel by inducing the coupling of the voltage-sensing domain (VSD) and the pore-forming domain (PD). Upon channel activation, PIP2-I and PIP2-II disrupt the VSD-calmodulin/CALM interaction, causing the release of CALM from the VSD which triggers the opening of the gate. Calcium suppresses KCNQ4 channel current through calcium-bound CALM C-terminus. Therefore CALM acts as calcium sensor that controls channel activity. In terms of biological role, pore-forming subunit of the voltage-gated potassium (Kv) channel involved in the regulation of sensory cells excitability in the cochlea. KCNQ4/Kv7.4 channel is composed of 4 pore-forming subunits assembled as tetramers. Promotes the outflow of potassium ions in the repolarization phase of action potential which plays a role in regulating membrane potential of excitable cells. The channel conducts a slowly activating and deactivating current. Current often shows some inward rectification at positive potentials. Channel may be selectively permeable in vitro to other cations besides potassium, in decreasing order of affinity K(+) = Rb(+) &gt; Cs(+) &gt; Na(+). Important for normal physiological function of inner ear such as sensory perception of sound. This chain is Potassium voltage-gated channel subfamily KQT member 4, found in Rattus norvegicus (Rat).